Consider the following 106-residue polypeptide: Glutaredoxin-1 (106 aa).

At A2 the chain carries N-acetylalanine. The Glutaredoxin domain maps to 3 to 106; sequence QAFVNSKIQP…TRLKQMGALQ (104 aa). At K9 the chain carries N6-succinyllysine. Intrachain disulfides connect C23/C26 and C79/C83.

The protein belongs to the glutaredoxin family.

It is found in the cytoplasm. Has a glutathione-disulfide oxidoreductase activity in the presence of NADPH and glutathione reductase. Reduces low molecular weight disulfides and proteins. This Bos taurus (Bovine) protein is Glutaredoxin-1 (GLRX).